The sequence spans 241 residues: Fatty acid metabolism regulator protein (241 aa).

Positions 6-74 constitute an HTH gntR-type domain; it reads KGPASFAEKY…HGKPTRVNNF (69 aa). The segment at residues 34-53 is a DNA-binding region (H-T-H motif); it reads ERELSELIGVTRTTLREVLQ.

In terms of assembly, homodimer.

The protein resides in the cytoplasm. In terms of biological role, multifunctional regulator of fatty acid metabolism. The sequence is that of Fatty acid metabolism regulator protein from Shewanella sp. (strain MR-4).